We begin with the raw amino-acid sequence, 440 residues long: UPF0761 membrane protein Rru_A2625 (440 aa).

A run of 7 helical transmembrane segments spans residues 29 to 49, 61 to 81, 117 to 137, 157 to 177, 201 to 221, 224 to 244, and 264 to 284; these read ILAT…THDI, LLAL…FPGF, GLTA…LLTI, LLVY…SFSL, PTLG…MLVP, PVPL…SALL, and ALAA…VVLM.

The protein belongs to the UPF0761 family.

It is found in the cell inner membrane. This Rhodospirillum rubrum (strain ATCC 11170 / ATH 1.1.1 / DSM 467 / LMG 4362 / NCIMB 8255 / S1) protein is UPF0761 membrane protein Rru_A2625.